Reading from the N-terminus, the 242-residue chain is Small ribosomal subunit protein uS2 (242 aa).

Belongs to the universal ribosomal protein uS2 family.

The polypeptide is Small ribosomal subunit protein uS2 (Neisseria meningitidis serogroup B (strain ATCC BAA-335 / MC58)).